The sequence spans 941 residues: Protein translocase subunit SecA (941 aa).

ATP is bound by residues glutamine 87, 105 to 109 (GEGKT), and aspartate 524. The segment at 871–919 (DEQPPMPAMEAHKLDPNTGEDQVAQAQSGLAPVAPAKRDPANPATWGKV) is disordered. Zn(2+) is bound by residues cysteine 925, cysteine 927, cysteine 936, and histidine 937.

Belongs to the SecA family. Monomer and homodimer. Part of the essential Sec protein translocation apparatus which comprises SecA, SecYEG and auxiliary proteins SecDF-YajC and YidC. Zn(2+) is required as a cofactor.

It localises to the cell inner membrane. Its subcellular location is the cytoplasm. It carries out the reaction ATP + H2O + cellular proteinSide 1 = ADP + phosphate + cellular proteinSide 2.. Functionally, part of the Sec protein translocase complex. Interacts with the SecYEG preprotein conducting channel. Has a central role in coupling the hydrolysis of ATP to the transfer of proteins into and across the cell membrane, serving both as a receptor for the preprotein-SecB complex and as an ATP-driven molecular motor driving the stepwise translocation of polypeptide chains across the membrane. The chain is Protein translocase subunit SecA from Afipia carboxidovorans (strain ATCC 49405 / DSM 1227 / KCTC 32145 / OM5) (Oligotropha carboxidovorans).